Reading from the N-terminus, the 187-residue chain is UPF0200 protein APE_1753.1 (187 aa).

Residue 13 to 20 participates in ATP binding; the sequence is GLPGSGKS.

The protein belongs to the UPF0200 family.

The chain is UPF0200 protein APE_1753.1 from Aeropyrum pernix (strain ATCC 700893 / DSM 11879 / JCM 9820 / NBRC 100138 / K1).